Here is an 841-residue protein sequence, read N- to C-terminus: Formin-like protein 10 (841 aa).

The signal sequence occupies residues 1–25; sequence MDGLCYVIFIIFSLLSCAFSPLSYA. The chain crosses the membrane as a helical span at residues 102 to 122; it reads LIPAISAVLAAATLIALAFFF. Disordered regions lie at residues 137–166, 254–297, and 403–512; these read SKSLASDISQSQQQTLPCPPPRNNNTQNKL, ISSH…RTVR, and KSSW…SKQR. Residues 139–152 show a composition bias toward polar residues; it reads SLASDISQSQQQTL. The span at 254–278 shows a compositional bias: low complexity; it reads ISSHSDSPAMSPSAAMSPPMNSTAP. Over residues 279–293 the composition is skewed to polar residues; sequence HWSTNQNTHSPSSPE. Positions 426–444 are enriched in pro residues; it reads LPPPQRPPPAMPEPPPLVP. In terms of domain architecture, FH2 spans 469 to 841; that stretch reads EGTTDRPKPK…KKMEVTSSLA (373 aa). Residues 502–512 show a composition bias toward polar residues; it reads YNSSNANSKQR.

The protein belongs to the formin-like family. Class-I subfamily.

It localises to the membrane. Might be involved in the organization and polarity of the actin cytoskeleton. This is Formin-like protein 10 (FH10) from Arabidopsis thaliana (Mouse-ear cress).